Consider the following 424-residue polypeptide: Spermatogenesis-associated protein 2-like protein (424 aa).

2 disordered regions span residues 233 to 258 (EDEG…AELA) and 273 to 300 (TGGR…EEGL). A Phosphoserine modification is found at Ser-327.

This sequence belongs to the SPATA2 family.

In Homo sapiens (Human), this protein is Spermatogenesis-associated protein 2-like protein.